A 359-amino-acid chain; its full sequence is Biotin synthase (359 aa).

Residues 67 to 302 (CCGNRVDLCS…QQILRYAGGR (236 aa)) form the Radical SAM core domain. [4Fe-4S] cluster contacts are provided by Cys-85, Cys-89, and Cys-92. Cys-130, Cys-167, Cys-227, and Arg-297 together coordinate [2Fe-2S] cluster.

It belongs to the radical SAM superfamily. Biotin synthase family. In terms of assembly, homodimer. [4Fe-4S] cluster serves as cofactor. [2Fe-2S] cluster is required as a cofactor.

The catalysed reaction is (4R,5S)-dethiobiotin + (sulfur carrier)-SH + 2 reduced [2Fe-2S]-[ferredoxin] + 2 S-adenosyl-L-methionine = (sulfur carrier)-H + biotin + 2 5'-deoxyadenosine + 2 L-methionine + 2 oxidized [2Fe-2S]-[ferredoxin]. It functions in the pathway cofactor biosynthesis; biotin biosynthesis; biotin from 7,8-diaminononanoate: step 2/2. Its function is as follows. Catalyzes the conversion of dethiobiotin (DTB) to biotin by the insertion of a sulfur atom into dethiobiotin via a radical-based mechanism. The sequence is that of Biotin synthase from Gloeothece citriformis (strain PCC 7424) (Cyanothece sp. (strain PCC 7424)).